Here is a 234-residue protein sequence, read N- to C-terminus: Leucyl/phenylalanyl-tRNA--protein transferase (234 aa).

The protein belongs to the L/F-transferase family.

It localises to the cytoplasm. It carries out the reaction N-terminal L-lysyl-[protein] + L-leucyl-tRNA(Leu) = N-terminal L-leucyl-L-lysyl-[protein] + tRNA(Leu) + H(+). The enzyme catalyses N-terminal L-arginyl-[protein] + L-leucyl-tRNA(Leu) = N-terminal L-leucyl-L-arginyl-[protein] + tRNA(Leu) + H(+). The catalysed reaction is L-phenylalanyl-tRNA(Phe) + an N-terminal L-alpha-aminoacyl-[protein] = an N-terminal L-phenylalanyl-L-alpha-aminoacyl-[protein] + tRNA(Phe). Functionally, functions in the N-end rule pathway of protein degradation where it conjugates Leu, Phe and, less efficiently, Met from aminoacyl-tRNAs to the N-termini of proteins containing an N-terminal arginine or lysine. The chain is Leucyl/phenylalanyl-tRNA--protein transferase from Salmonella agona (strain SL483).